A 427-amino-acid polypeptide reads, in one-letter code: GTPase Obg (427 aa).

In terms of domain architecture, Obg spans 1 to 158 (MFVDIAKIYV…LWVILELKVL (158 aa)). The region spanning 159 to 330 (ADVGLIGYPN…VLKRAYELLK (172 aa)) is the OBG-type G domain. GTP contacts are provided by residues 165-172 (GYPNVGKS), 190-194 (FTTKY), 212-215 (DIPG), 282-285 (NKMD), and 311-313 (SAA). Mg(2+) is bound by residues S172 and T192. The 81-residue stretch at 347–427 (FVYYKKKDVK…ILDVEFEYYE (81 aa)) folds into the OCT domain.

Belongs to the TRAFAC class OBG-HflX-like GTPase superfamily. OBG GTPase family. Monomer. The cofactor is Mg(2+).

The protein resides in the cytoplasm. Its function is as follows. An essential GTPase which binds GTP, GDP and possibly (p)ppGpp with moderate affinity, with high nucleotide exchange rates and a fairly low GTP hydrolysis rate. Plays a role in control of the cell cycle, stress response, ribosome biogenesis and in those bacteria that undergo differentiation, in morphogenesis control. This chain is GTPase Obg, found in Caldicellulosiruptor saccharolyticus (strain ATCC 43494 / DSM 8903 / Tp8T 6331).